Here is a 112-residue protein sequence, read N- to C-terminus: Urocortin-2 (112 aa).

The first 22 residues, Met1–Val22, serve as a signal peptide directing secretion. Residues Thr23–Ser70 constitute a propeptide that is removed on maturation. The segment at Thr27–Arg66 is disordered. Residues Thr38–Ala58 show a composition bias toward low complexity.

This sequence belongs to the sauvagine/corticotropin-releasing factor/urotensin I family. Binds with high affinity to CRF receptors 2-alpha and 2-beta. Post-translationally, glycosylated.

It localises to the secreted. Its function is as follows. Suppresses food intake, delays gastric emptying and decreases heat-induced edema. Might represent an endogenous ligand for maintaining homeostasis after stress. The protein is Urocortin-2 (UCN2) of Homo sapiens (Human).